The following is a 321-amino-acid chain: Solute carrier family 25 member 33 (321 aa).

3 Solcar repeats span residues Glu9–Gln118, Asn126–Tyr213, and Thr231–Leu315. 6 helical membrane passes run Leu12–Leu32, Val49–Val65, Gly121–Val141, Leu190–Leu210, Phe233–Pro253, and Gln298–Asp318.

It belongs to the mitochondrial carrier (TC 2.A.29) family.

Its subcellular location is the mitochondrion inner membrane. The enzyme catalyses UTP(in) + UDP(out) = UTP(out) + UDP(in). The catalysed reaction is dUTP(out) + UTP(in) = dUTP(in) + UTP(out). It catalyses the reaction 5-methyl-UTP(out) + UTP(in) = 5-methyl-UTP(in) + UTP(out). It carries out the reaction 5-methyl-UDP(out) + UTP(in) = 5-methyl-UDP(in) + UTP(out). The enzyme catalyses UTP(in) + CTP(out) = UTP(out) + CTP(in). The catalysed reaction is CDP(out) + UTP(in) = CDP(in) + UTP(out). It catalyses the reaction dCTP(out) + UTP(in) = dCTP(in) + UTP(out). It carries out the reaction dCDP(out) + UTP(in) = dCDP(in) + UTP(out). The enzyme catalyses UTP(in) + GTP(out) = UTP(out) + GTP(in). The catalysed reaction is UTP(in) + GDP(out) = UTP(out) + GDP(in). It catalyses the reaction dGTP(out) + UTP(in) = dGTP(in) + UTP(out). It carries out the reaction dGDP(out) + UTP(in) = dGDP(in) + UTP(out). The enzyme catalyses ITP(out) + UTP(in) = ITP(in) + UTP(out). In terms of biological role, mitochondrial transporter that imports/exports pyrimidine nucleotides into and from mitochondria. Selectively transports uridine, thymidine, guanosine, cytosine and inosine (deoxy)nucleoside di- and triphosphates by an antiport mechanism. May import (deoxy)nucleoside triphosphates in exchange for intramitochondrial (deoxy)nucleoside diphosphates, thus providing precursors necessary for de novo synthesis of mitochondrial DNA and RNA while exporting products of their catabolism. Participates in mitochondrial genome maintenance, regulation of mitochondrial membrane potential and mitochondrial respiration. Upon INS or IGF1 stimulation regulates cell growth and proliferation by controlling mitochondrial DNA replication and transcription, the ratio of mitochondria-to nuclear-encoded components of the electron transport chain resulting in control of mitochondrial ROS production. Participates in dendritic cell endocytosis and may associate with mitochondrial oxidative phosphorylation. The polypeptide is Solute carrier family 25 member 33 (SLC25A33) (Bos taurus (Bovine)).